A 244-amino-acid polypeptide reads, in one-letter code: Non-structural protein 3 (244 aa).

This sequence belongs to the aquareoviridae NS3 protein family.

The protein is Non-structural protein 3 (S11) of Notemigonus crysoleucas (Golden shiner).